Reading from the N-terminus, the 241-residue chain is ATP synthase subunit a (241 aa).

A run of 5 helical transmembrane segments spans residues 30–50 (GQVF…VVVG), 91–111 (FIGT…LVPW), 128–148 (INTT…AGLS), 193–213 (LVVA…VMFL), and 214–234 (GLFT…YYIG).

It belongs to the ATPase A chain family. As to quaternary structure, F-type ATPases have 2 components, CF(1) - the catalytic core - and CF(0) - the membrane proton channel. CF(1) has five subunits: alpha(3), beta(3), gamma(1), delta(1), epsilon(1). CF(0) has four main subunits: a, b, b' and c.

The protein localises to the cellular thylakoid membrane. Its function is as follows. Key component of the proton channel; it plays a direct role in the translocation of protons across the membrane. The polypeptide is ATP synthase subunit a (Prochlorococcus marinus (strain MIT 9303)).